A 50-amino-acid polypeptide reads, in one-letter code: uncharacterized protein (50 aa).

This is an uncharacterized protein from Ornithodoros (relapsing fever ticks).